We begin with the raw amino-acid sequence, 208 residues long: uncharacterized protein (208 aa).

3 disordered regions span residues 91 to 115 (PGQA…PSQD), 127 to 156 (QSWS…KRPG), and 182 to 208 (NKLG…RKFK). Polar residues predominate over residues 127 to 136 (QSWSSGTSRP).

This is an uncharacterized protein from Rattus norvegicus (Rat).